Here is a 276-residue protein sequence, read N- to C-terminus: Small ribosomal subunit protein uS3 (276 aa).

A KH type-2 domain is found at 39-110 (IRRETMKFLK…KINIKIKEIK (72 aa)).

Belongs to the universal ribosomal protein uS3 family. In terms of assembly, part of the 30S ribosomal subunit. Forms a tight complex with proteins S10 and S14.

Functionally, binds the lower part of the 30S subunit head. Binds mRNA in the 70S ribosome, positioning it for translation. This Borrelia turicatae (strain 91E135) protein is Small ribosomal subunit protein uS3.